We begin with the raw amino-acid sequence, 509 residues long: Aspartyl/glutamyl-tRNA(Asn/Gln) amidotransferase subunit B (509 aa).

It belongs to the GatB/GatE family. GatB subfamily. Heterotrimer of A, B and C subunits.

The enzyme catalyses L-glutamyl-tRNA(Gln) + L-glutamine + ATP + H2O = L-glutaminyl-tRNA(Gln) + L-glutamate + ADP + phosphate + H(+). It catalyses the reaction L-aspartyl-tRNA(Asn) + L-glutamine + ATP + H2O = L-asparaginyl-tRNA(Asn) + L-glutamate + ADP + phosphate + 2 H(+). Its function is as follows. Allows the formation of correctly charged Asn-tRNA(Asn) or Gln-tRNA(Gln) through the transamidation of misacylated Asp-tRNA(Asn) or Glu-tRNA(Gln) in organisms which lack either or both of asparaginyl-tRNA or glutaminyl-tRNA synthetases. The reaction takes place in the presence of glutamine and ATP through an activated phospho-Asp-tRNA(Asn) or phospho-Glu-tRNA(Gln). The polypeptide is Aspartyl/glutamyl-tRNA(Asn/Gln) amidotransferase subunit B (Mycobacterium leprae (strain Br4923)).